We begin with the raw amino-acid sequence, 234 residues long: Purine nucleoside phosphorylase DeoD-type (234 aa).

His-5 provides a ligand contact to a purine D-ribonucleoside. Residues Gly-21, Arg-25, Arg-44, and 88–91 (RVGT) contribute to the phosphate site. A purine D-ribonucleoside-binding positions include 178-180 (EME) and 202-203 (SD). Asp-203 (proton donor) is an active-site residue.

It belongs to the PNP/UDP phosphorylase family. As to quaternary structure, homohexamer; trimer of homodimers.

It catalyses the reaction a purine D-ribonucleoside + phosphate = a purine nucleobase + alpha-D-ribose 1-phosphate. It carries out the reaction a purine 2'-deoxy-D-ribonucleoside + phosphate = a purine nucleobase + 2-deoxy-alpha-D-ribose 1-phosphate. Catalyzes the reversible phosphorolytic breakdown of the N-glycosidic bond in the beta-(deoxy)ribonucleoside molecules, with the formation of the corresponding free purine bases and pentose-1-phosphate. This chain is Purine nucleoside phosphorylase DeoD-type, found in Lactococcus lactis subsp. cremoris (strain MG1363).